Here is a 217-residue protein sequence, read N- to C-terminus: Cytidylate kinase (217 aa).

10 to 18 (GPAGAGKST) lines the ATP pocket.

The protein belongs to the cytidylate kinase family. Type 1 subfamily.

It is found in the cytoplasm. The enzyme catalyses CMP + ATP = CDP + ADP. The catalysed reaction is dCMP + ATP = dCDP + ADP. In Alkaliphilus oremlandii (strain OhILAs) (Clostridium oremlandii (strain OhILAs)), this protein is Cytidylate kinase.